Here is a 137-residue protein sequence, read N- to C-terminus: Major seminal plasma glycoprotein PSP-II (137 aa).

Positions 1-21 (MKLGTAIPWALLLSTATLVST) are cleaved as a signal peptide. 2 disulfides stabilise this stretch: Cys30–Cys51 and Cys74–Cys95. The region spanning 30–131 (CGRVIKDTSG…SPFLIYFYGS (102 aa)) is the CUB domain. A glycan (N-linked (GlcNAc...) (complex) asparagine) is linked at Asn119.

As to quaternary structure, monomer or heterodimer with PSP-I (depending on the type of glycosylation of PSP-I). As to expression, seminal plasma or sperm.

The protein resides in the secreted. The protein is Major seminal plasma glycoprotein PSP-II of Sus scrofa (Pig).